Here is a 640-residue protein sequence, read N- to C-terminus: Pleckstrin homology-like domain family B member 3 (640 aa).

Disordered stretches follow at residues 1 to 100 (MGTR…AARR), 162 to 189 (LEQQAASEQRGRQQREQEQRRLSQERDR), 241 to 262 (LERESRQEEEDRDSPGPQVPDP), 387 to 412 (GLQRTGSLPRKRGERGSQRGSPRPLS), and 476 to 504 (REGTRRGTEGSSGPAVPAITAPPTPPHPP). The segment covering 76–90 (PPIAMAATPPASTSS) has biased composition (low complexity). The stretch at 104 to 327 (QQLEALTRVA…ERSRLLELNC (224 aa)) forms a coiled coil. Basic and acidic residues predominate over residues 170 to 189 (QRGRQQREQEQRRLSQERDR). Residues 454-481 (DIAHMERLLQQAMAERERLLKAREGTRR) adopt a coiled-coil conformation. Residues 495–504 (TAPPTPPHPP) are compositionally biased toward pro residues. Residues 532-635 (GCCCRGPLVK…WMDVIVTAAD (104 aa)) enclose the PH domain.

This chain is Pleckstrin homology-like domain family B member 3 (PHLDB3), found in Homo sapiens (Human).